A 248-amino-acid chain; its full sequence is Tryptophan synthase alpha chain (248 aa).

Catalysis depends on proton acceptor residues E36 and D47.

This sequence belongs to the TrpA family. As to quaternary structure, tetramer of two alpha and two beta chains.

It catalyses the reaction (1S,2R)-1-C-(indol-3-yl)glycerol 3-phosphate + L-serine = D-glyceraldehyde 3-phosphate + L-tryptophan + H2O. The protein operates within amino-acid biosynthesis; L-tryptophan biosynthesis; L-tryptophan from chorismate: step 5/5. Its function is as follows. The alpha subunit is responsible for the aldol cleavage of indoleglycerol phosphate to indole and glyceraldehyde 3-phosphate. The protein is Tryptophan synthase alpha chain of Pyrococcus abyssi (strain GE5 / Orsay).